The primary structure comprises 497 residues: UDP-N-acetylmuramoyl-L-alanyl-D-glutamate--2,6-diaminopimelate ligase (497 aa).

Residue S33 coordinates UDP-N-acetyl-alpha-D-muramoyl-L-alanyl-D-glutamate. 119–125 (GTNGKTT) lines the ATP pocket. Residues 161 to 162 (TT), S188, Q194, and R196 contribute to the UDP-N-acetyl-alpha-D-muramoyl-L-alanyl-D-glutamate site. Position 228 is an N6-carboxylysine (K228). Residues R390, 414–417 (DNPR), G465, and E469 each bind meso-2,6-diaminopimelate. The short motif at 414-417 (DNPR) is the Meso-diaminopimelate recognition motif element.

Belongs to the MurCDEF family. MurE subfamily. Mg(2+) serves as cofactor. Post-translationally, carboxylation is probably crucial for Mg(2+) binding and, consequently, for the gamma-phosphate positioning of ATP.

The protein resides in the cytoplasm. It carries out the reaction UDP-N-acetyl-alpha-D-muramoyl-L-alanyl-D-glutamate + meso-2,6-diaminopimelate + ATP = UDP-N-acetyl-alpha-D-muramoyl-L-alanyl-gamma-D-glutamyl-meso-2,6-diaminopimelate + ADP + phosphate + H(+). It functions in the pathway cell wall biogenesis; peptidoglycan biosynthesis. Its function is as follows. Catalyzes the addition of meso-diaminopimelic acid to the nucleotide precursor UDP-N-acetylmuramoyl-L-alanyl-D-glutamate (UMAG) in the biosynthesis of bacterial cell-wall peptidoglycan. The polypeptide is UDP-N-acetylmuramoyl-L-alanyl-D-glutamate--2,6-diaminopimelate ligase (Synechococcus elongatus (strain ATCC 33912 / PCC 7942 / FACHB-805) (Anacystis nidulans R2)).